The primary structure comprises 305 residues: Methionyl-tRNA formyltransferase (305 aa).

109 to 112 (SLLP) contributes to the (6S)-5,6,7,8-tetrahydrofolate binding site.

Belongs to the Fmt family.

The catalysed reaction is L-methionyl-tRNA(fMet) + (6R)-10-formyltetrahydrofolate = N-formyl-L-methionyl-tRNA(fMet) + (6S)-5,6,7,8-tetrahydrofolate + H(+). Its function is as follows. Attaches a formyl group to the free amino group of methionyl-tRNA(fMet). The formyl group appears to play a dual role in the initiator identity of N-formylmethionyl-tRNA by promoting its recognition by IF2 and preventing the misappropriation of this tRNA by the elongation apparatus. The chain is Methionyl-tRNA formyltransferase from Paramagnetospirillum magneticum (strain ATCC 700264 / AMB-1) (Magnetospirillum magneticum).